Reading from the N-terminus, the 233-residue chain is Large ribosomal subunit protein uL1 (233 aa).

The protein belongs to the universal ribosomal protein uL1 family. As to quaternary structure, part of the 50S ribosomal subunit.

Its function is as follows. Binds directly to 23S rRNA. The L1 stalk is quite mobile in the ribosome, and is involved in E site tRNA release. In terms of biological role, protein L1 is also a translational repressor protein, it controls the translation of the L11 operon by binding to its mRNA. This Parvibaculum lavamentivorans (strain DS-1 / DSM 13023 / NCIMB 13966) protein is Large ribosomal subunit protein uL1.